Here is a 113-residue protein sequence, read N- to C-terminus: Hydrogenase maturation factor HybF (113 aa).

The Ni(2+) site is built by His2 and Glu3. Cys73, Cys76, Cys89, and Cys92 together coordinate Zn(2+).

This sequence belongs to the HypA/HybF family. HybF subfamily.

Its function is as follows. Involved in the maturation of [NiFe] hydrogenases. Required for nickel insertion into the metal center of the hydrogenase. The sequence is that of Hydrogenase maturation factor HybF from Klebsiella pneumoniae.